Here is a 1089-residue protein sequence, read N- to C-terminus: GPI ethanolamine phosphate transferase 3, catalytic subunit (1089 aa).

Residues 4–24 form a helical membrane-spanning segment; it reads ASVLLFLAWVCFLFYAGIALF. The N-linked (GlcNAc...) asparagine glycan is linked to Asn-268. A run of 13 helical transmembrane segments spans residues 457 to 477, 482 to 502, 510 to 530, 541 to 561, 575 to 595, 668 to 688, 701 to 721, 747 to 767, 830 to 850, 857 to 877, 944 to 964, 1014 to 1034, and 1048 to 1068; these read LLAASCFICLLASQWAISPGF, LLLTPVAWGLVGAIAYAGLLG, LVLLGAVAAVSSFLPFLWKAW, TLFPIPGPVLLLLLFRLAVFF, FLLGSFILLLVVQLHWEGQLL, LWYGACVAALVALLAAVRLWL, MLFVRWGLPLMALGTAAYWAL, VAGLAASGLALLLWKPVTVLV, SVYSAAMVTALTLLAFPLLLL, LVFLLLFLQSFLLLHLLAAGI, FASHLLFAVGCPLLLLWPFLC, LKYLFILGIQILACALAASIL, and FIFEAVGFIVSSVGLLLGIAL.

It belongs to the PIGG/PIGN/PIGO family. PIGO subfamily. Part of the ethanolamine phosphate transferase 3 complex composed by PIGO and PIGF. PIGF is required to stabilize PIGO.

It localises to the endoplasmic reticulum membrane. Its pathway is glycolipid biosynthesis; glycosylphosphatidylinositol-anchor biosynthesis. Functionally, catalytic subunit of the ethanolamine phosphate transferase 3 complex that transfers an ethanolamine phosphate (EtNP) from a phosphatidylethanolamine (PE) to the 6-OH position of the third alpha-1,2-linked mannose of an alpha-D-Man-(1-&gt;2)-alpha-D-Man-(1-&gt;6)-2-PEtn-alpha-D-Man-(1-&gt;4)-alpha-D-GlcN-(1-&gt;6)-(1-radyl,2-acyl-sn-glycero-3-phospho)-2-acyl-inositol (also termed H6) intermediate to generate a 6-PEtn-alpha-D-Man-(1-&gt;2)-alpha-D-Man-(1-&gt;6)-2-PEtn-alpha-D-Man-(1-&gt;4)-alpha-D-GlcN-(1-&gt;6)-(1-radyl,2-acyl-sn-glycero-3-phospho)-2-acyl-inositol (also termed H7) and participates in the tenth step of the glycosylphosphatidylinositol-anchor biosynthesis. In Homo sapiens (Human), this protein is GPI ethanolamine phosphate transferase 3, catalytic subunit.